We begin with the raw amino-acid sequence, 243 residues long: Uba3-binding protein but1 (243 aa).

The interval 28-50 is disordered; sequence KSTKKRRSSTKDEETRGMHPHIK.

As to quaternary structure, homodimer. Interacts with but2 and uba3.

The protein resides in the nucleus. In terms of biological role, acts as a negative regulator of the NEDD8 pathway. Has a role in meiosis. This chain is Uba3-binding protein but1 (but1), found in Schizosaccharomyces pombe (strain 972 / ATCC 24843) (Fission yeast).